The following is a 617-amino-acid chain: Proline--tRNA ligase (617 aa).

The protein belongs to the class-II aminoacyl-tRNA synthetase family. ProS type 1 subfamily. In terms of assembly, homodimer.

The protein resides in the cytoplasm. The enzyme catalyses tRNA(Pro) + L-proline + ATP = L-prolyl-tRNA(Pro) + AMP + diphosphate. In terms of biological role, catalyzes the attachment of proline to tRNA(Pro) in a two-step reaction: proline is first activated by ATP to form Pro-AMP and then transferred to the acceptor end of tRNA(Pro). As ProRS can inadvertently accommodate and process non-cognate amino acids such as alanine and cysteine, to avoid such errors it has two additional distinct editing activities against alanine. One activity is designated as 'pretransfer' editing and involves the tRNA(Pro)-independent hydrolysis of activated Ala-AMP. The other activity is designated 'posttransfer' editing and involves deacylation of mischarged Ala-tRNA(Pro). The misacylated Cys-tRNA(Pro) is not edited by ProRS. The sequence is that of Proline--tRNA ligase from Streptococcus pneumoniae serotype 4 (strain ATCC BAA-334 / TIGR4).